The primary structure comprises 223 residues: Cytidylate kinase (223 aa).

ATP is bound at residue glycine 10–threonine 18.

This sequence belongs to the cytidylate kinase family. Type 1 subfamily.

It is found in the cytoplasm. The enzyme catalyses CMP + ATP = CDP + ADP. It carries out the reaction dCMP + ATP = dCDP + ADP. The sequence is that of Cytidylate kinase from Streptococcus pneumoniae (strain 70585).